Here is a 198-residue protein sequence, read N- to C-terminus: CXXC-type zinc finger protein 4 (198 aa).

Residues 114 to 134 (NHSSSSSSSSGGAGGANPAKK) form a disordered region. The CXXC-type zinc-finger motif lies at 132 to 173 (AKKKRKRCGVCVPCKRLINCGVCSSCRNRKTGHQICKFRKCE). 6 residues coordinate Zn(2+): Cys139, Cys142, Cys145, Cys151, Cys154, and Cys157. An interaction with DVL1 region spans residues 161–166 (KTGHQI). Zn(2+)-binding residues include Cys167 and Cys172.

Interacts with the PDZ domain of DVL1.

Its subcellular location is the cytoplasm. Functionally, acts as a negative regulator of the Wnt signaling pathway via its interaction with DVL1. Binds preferentially to DNA containing cytidine-phosphate-guanosine (CpG) dinucleotides over CpH (H=A, T, and C), hemimethylated-CpG and hemimethylated-hydroxymethyl-CpG. This Homo sapiens (Human) protein is CXXC-type zinc finger protein 4 (CXXC4).